The sequence spans 159 residues: 2-C-methyl-D-erythritol 2,4-cyclodiphosphate synthase (159 aa).

A divalent metal cation-binding residues include aspartate 8 and histidine 10. 4-CDP-2-C-methyl-D-erythritol 2-phosphate contacts are provided by residues 8–10 (DVH) and 34–35 (HS). Histidine 42 contacts a divalent metal cation. Residues 56-58 (DIG), 61-65 (FPDTD), 100-106 (AQAPKML), 132-135 (TTTE), phenylalanine 139, and arginine 142 each bind 4-CDP-2-C-methyl-D-erythritol 2-phosphate.

Belongs to the IspF family. As to quaternary structure, homotrimer. It depends on a divalent metal cation as a cofactor.

It carries out the reaction 4-CDP-2-C-methyl-D-erythritol 2-phosphate = 2-C-methyl-D-erythritol 2,4-cyclic diphosphate + CMP. The protein operates within isoprenoid biosynthesis; isopentenyl diphosphate biosynthesis via DXP pathway; isopentenyl diphosphate from 1-deoxy-D-xylulose 5-phosphate: step 4/6. Involved in the biosynthesis of isopentenyl diphosphate (IPP) and dimethylallyl diphosphate (DMAPP), two major building blocks of isoprenoid compounds. Catalyzes the conversion of 4-diphosphocytidyl-2-C-methyl-D-erythritol 2-phosphate (CDP-ME2P) to 2-C-methyl-D-erythritol 2,4-cyclodiphosphate (ME-CPP) with a corresponding release of cytidine 5-monophosphate (CMP). This is 2-C-methyl-D-erythritol 2,4-cyclodiphosphate synthase from Escherichia coli O139:H28 (strain E24377A / ETEC).